A 1281-amino-acid chain; its full sequence is Enterobactin synthase component F (1281 aa).

The interval 1-301 (MSQHLPLVAA…NVLPLGIHIA (301 aa)) is elongation/condensation. The interval 486–891 (SYREMHEQVV…ALPDVKQAVT (406 aa)) is adenylation. In terms of domain architecture, Carrier spans 975–1050 (APKAGSETII…KLATIIDGEE (76 aa)). At S1010 the chain carries O-(pantetheine 4'-phosphoryl)serine. Residues 1070–1281 (PTLFCFHPAS…GPIIRATLNR (212 aa)) are thioesterase. H1259 acts as the Proton acceptor; for thioesterase activity in catalysis.

Belongs to the ATP-dependent AMP-binding enzyme family. EntF subfamily. Proteins EntB, EntD, EntE and EntF are the component of the enterobactin synthase. Components probably do not form a stable complex. EntF acts as a catalytic monomer. Pantetheine 4'-phosphate serves as cofactor. In terms of processing, 4'-phosphopantetheine is transferred from CoA to a specific serine of apo-EntF by EntD. Holo-EntF so formed is then acylated with seryl-AMP.

Its subcellular location is the cytoplasm. The enzyme catalyses 3 2,3-dihydroxybenzoate + 3 L-serine + 6 ATP = enterobactin + 6 AMP + 6 diphosphate + 4 H(+). The catalysed reaction is holo-[peptidyl-carrier protein] + L-serine + ATP = L-seryl-[peptidyl-carrier protein] + AMP + diphosphate. The protein operates within siderophore biosynthesis; enterobactin biosynthesis. Its function is as follows. Involved in the biosynthesis of the siderophore enterobactin (enterochelin), which is a macrocyclic trimeric lactone of N-(2,3-dihydroxybenzoyl)-serine. EntF catalyzes the activation of L-serine via ATP-dependent PPi exchange reaction to form seryladenylate. Activated L-serine is loaded onto the peptidyl carrier domain via a thioester linkage to the phosphopanthetheine moiety, forming seryl-S-Ppant-EntF. EntF acts then as the sole catalyst for the formation of the three amide and three ester linkages found in enterobactin, using seryladenylate and 2,3-dihydroxybenzoate-S-Ppant-EntB (DHB-S-Ppant-EntB) as substrates, via the formation of a DHB-Ser-S-Ppant-EntF intermediate. The chain is Enterobactin synthase component F (entF) from Shigella flexneri.